Consider the following 325-residue polypeptide: Hydroxymethylglutaryl-CoA lyase, mitochondrial (325 aa).

A mitochondrion-targeting transit peptide spans 1–27; it reads MATVRKAFPQRLVGLASLRAASTSSMG. One can recognise a Pyruvate carboxyltransferase domain in the interval 33–300; the sequence is VKIVEVGPRD…HTGVNLQKLL (268 aa). Substrate is bound at residue Arg-41. A divalent metal cation is bound at residue Asp-42. The residue at position 48 (Lys-48) is an N6-acetyllysine; alternate. Lys-48 is subject to N6-succinyllysine; alternate. Position 111 is an N6-acetyllysine (Lys-111). Residues Lys-137 and Lys-179 each carry the N6-acetyllysine; alternate modification. 2 positions are modified to N6-succinyllysine; alternate: Lys-137 and Lys-179. The a divalent metal cation site is built by His-233 and His-235. The active site involves Cys-266. An a divalent metal cation-binding site is contributed by Asn-275. The short motif at 323 to 325 is the Microbody targeting signal element; the sequence is CKL. Lys-324 bears the N6-acetyllysine mark.

It belongs to the HMG-CoA lyase family. As to quaternary structure, homodimer; disulfide-linked. Can also form homotetramers. In terms of tissue distribution, in suckling rat, highest levels in liver and in intestine. Lower levels in heart, kidney and cerebellum. Weak expression in brain cortex, medulla and midbrain. Levels decrease slightly during weaning.

It localises to the mitochondrion matrix. Its subcellular location is the peroxisome. The catalysed reaction is (3S)-3-hydroxy-3-methylglutaryl-CoA = acetoacetate + acetyl-CoA. The protein operates within metabolic intermediate metabolism; (S)-3-hydroxy-3-methylglutaryl-CoA degradation; acetoacetate from (S)-3-hydroxy-3-methylglutaryl-CoA: step 1/1. Functionally, mitochondrial 3-hydroxy-3-methylglutaryl-CoA lyase that catalyzes a cation-dependent cleavage of (S)-3-hydroxy-3-methylglutaryl-CoA into acetyl-CoA and acetoacetate, a key step in ketogenesis. Terminal step in leucine catabolism. Ketone bodies (beta-hydroxybutyrate, acetoacetate and acetone) are essential as an alternative source of energy to glucose, as lipid precursors and as regulators of metabolism. The polypeptide is Hydroxymethylglutaryl-CoA lyase, mitochondrial (Hmgcl) (Rattus norvegicus (Rat)).